Consider the following 327-residue polypeptide: Malate dehydrogenase (327 aa).

Position 11–17 (11–17 (GAAGQIA)) interacts with NAD(+). Residues R92 and R98 each coordinate substrate. NAD(+)-binding positions include N105, Q112, and 129–131 (VGN). Substrate is bound by residues N131 and R162. The Proton acceptor role is filled by H187.

It belongs to the LDH/MDH superfamily. MDH type 2 family.

The enzyme catalyses (S)-malate + NAD(+) = oxaloacetate + NADH + H(+). In terms of biological role, catalyzes the reversible oxidation of malate to oxaloacetate. The sequence is that of Malate dehydrogenase from Nitrosospira multiformis (strain ATCC 25196 / NCIMB 11849 / C 71).